We begin with the raw amino-acid sequence, 583 residues long: Aspartate--tRNA ligase (583 aa).

E174 contacts L-aspartate. Residues 198–201 (QTFK) form an aspartate region. R220 lines the L-aspartate pocket. Residues 220–222 (RDE) and Q229 each bind ATP. H445 provides a ligand contact to L-aspartate. Position 479 (E479) interacts with ATP. R486 contacts L-aspartate. Residue 531–534 (GLDR) participates in ATP binding.

The protein belongs to the class-II aminoacyl-tRNA synthetase family. Type 1 subfamily. In terms of assembly, homodimer.

It is found in the cytoplasm. It catalyses the reaction tRNA(Asp) + L-aspartate + ATP = L-aspartyl-tRNA(Asp) + AMP + diphosphate. Catalyzes the attachment of L-aspartate to tRNA(Asp) in a two-step reaction: L-aspartate is first activated by ATP to form Asp-AMP and then transferred to the acceptor end of tRNA(Asp). The polypeptide is Aspartate--tRNA ligase (Flavobacterium psychrophilum (strain ATCC 49511 / DSM 21280 / CIP 103535 / JIP02/86)).